Reading from the N-terminus, the 612-residue chain is Zinc metalloproteinase-disintegrin-like HV1 (612 aa).

Residues 1-20 (MIQVLLVTICLAVFPYQGSS) form the signal peptide. Positions 21–188 (IILESGNVND…SIKEDSQSNL (168 aa)) are excised as a propeptide. Residues 200–396 (KYVKFFLVAD…NMPQCILKKP (197 aa)) enclose the Peptidase M12B domain. A glycan (N-linked (GlcNAc...) asparagine) is linked at Asn-219. Cystine bridges form between Cys-311/Cys-391, Cys-351/Cys-375, and Cys-353/Cys-358. His-336 provides a ligand contact to Zn(2+). Glu-337 is an active-site residue. Positions 340 and 346 each coordinate Zn(2+). A Disintegrin domain is found at 404–489 (PPVCGNYFVE…AECTDRFQRN (86 aa)). Residues Val-406, Asn-409, Phe-411, Glu-413, Glu-416, and Asp-419 each contribute to the Ca(2+) site. 14 disulfide bridges follow: Cys-407-Cys-436, Cys-418-Cys-431, Cys-420-Cys-426, Cys-430-Cys-453, Cys-444-Cys-450, Cys-449-Cys-475, Cys-462-Cys-482, Cys-469-Cys-500, Cys-493-Cys-505, Cys-512-Cys-562, Cys-527-Cys-573, Cys-540-Cys-550, Cys-557-Cys-599, and Cys-593-Cys-605. The D/ECD-tripeptide signature appears at 468-470 (ECD). 5 residues coordinate Ca(2+): Asp-470, Met-471, Asp-473, Asp-484, and Arg-485. N-linked (GlcNAc...) asparagine glycosylation occurs at Asn-502. N-linked (GlcNAc...) asparagine glycosylation is present at Asn-609.

This sequence belongs to the venom metalloproteinase (M12B) family. P-III subfamily. P-IIIc sub-subfamily. Homodimer; disulfide-linked. Zn(2+) serves as cofactor. Expressed by the venom gland.

It localises to the secreted. Its activity is regulated as follows. Inhibited by EDTA and EGTA. Snake venom zinc metalloproteinase-disintegrin-like that potently activates prothrombin (F2). Does not elicit any hemorrhagic response. Barely inhibits collagen-induced platelet aggregation. Hydrolyzes the alpha-chain of fibrin and fibrinogen (FGA), without affecting the Bbeta- and gamma-chains. Induces apoptosis in cultured vascular endothelial cells. The sequence is that of Zinc metalloproteinase-disintegrin-like HV1 from Protobothrops flavoviridis (Habu).